Consider the following 260-residue polypeptide: ATP synthase subunit a (260 aa).

The propeptide at 1–11 (MQNTLLRTYIN) is removed in mature form. A run of 6 helical transmembrane segments spans residues 37-57 (ITTFTLYTIIVLLVVSSLYVL), 96-116 (YFPFIYTLFMFILISNLISMI), 126-146 (FVFIISLSMIIWLGITILSLF), 152-172 (FFSLFVPSGTALPLVPLLVVI), 192-212 (IFSGHLLMAILAGLTMTFVQI), and 217-237 (LILGFIPLAIILIIMCLEFGI).

It belongs to the ATPase A chain family. As to quaternary structure, F-type ATPases have 2 components, CF(1) - the catalytic core - and CF(0) - the membrane proton channel. CF(1) has five subunits: alpha(3), beta(3), gamma(1), delta(1), epsilon(1). CF(0) has three main subunits: a, b and c.

The protein localises to the mitochondrion inner membrane. Mitochondrial membrane ATP synthase (F(1)F(0) ATP synthase or Complex V) produces ATP from ADP in the presence of a proton gradient across the membrane which is generated by electron transport complexes of the respiratory chain. F-type ATPases consist of two structural domains, F(1) - containing the extramembraneous catalytic core and F(0) - containing the membrane proton channel, linked together by a central stalk and a peripheral stalk. During catalysis, ATP synthesis in the catalytic domain of F(1) is coupled via a rotary mechanism of the central stalk subunits to proton translocation. Key component of the proton channel; it may play a direct role in the translocation of protons across the membrane. This chain is ATP synthase subunit a (ATP6), found in Candida glabrata (strain ATCC 2001 / BCRC 20586 / JCM 3761 / NBRC 0622 / NRRL Y-65 / CBS 138) (Yeast).